The chain runs to 451 residues: UDP-N-acetylmuramate--L-alanine ligase (451 aa).

110–116 (GTHGKTT) contacts ATP.

This sequence belongs to the MurCDEF family.

The protein resides in the cytoplasm. It carries out the reaction UDP-N-acetyl-alpha-D-muramate + L-alanine + ATP = UDP-N-acetyl-alpha-D-muramoyl-L-alanine + ADP + phosphate + H(+). Its pathway is cell wall biogenesis; peptidoglycan biosynthesis. Cell wall formation. The sequence is that of UDP-N-acetylmuramate--L-alanine ligase from Francisella tularensis subsp. mediasiatica (strain FSC147).